We begin with the raw amino-acid sequence, 606 residues long: Endo-beta-1,4-xylanase Xyn10C (606 aa).

The first 19 residues, 1 to 19, serve as a signal peptide directing secretion; sequence MKKIQQLLMLSLISSTLIA. A lipid anchor (N-palmitoyl cysteine) is attached at cysteine 20. Residue cysteine 20 is the site of S-diacylglycerol cysteine attachment. The interval 23-64 is disordered; it reads GGGGGSTPTTSSSPQSSSPASTPSSASSSSIISSSSLSSSLS. Over residues 29–64 the composition is skewed to low complexity; sequence TPTTSSSPQSSSPASTPSSASSSSIISSSSLSSSLS. A CBM15 domain is found at 91 to 242; sequence GNVVIEVDMA…KSVTITLAQE (152 aa). The a carbohydrate site is built by asparagine 106 and glutamine 171. Cysteine 183 and cysteine 200 are oxidised to a cystine. A carbohydrate is bound at residue glutamine 217. Residues 245–596 form the GH10 domain; that stretch reads SANVDHLRDL…KPALRGFADA (352 aa). Substrate-binding positions include 296–299, histidine 332, and asparagine 384; that span reads NIMK. The Proton donor role is filled by glutamate 385. Glutamate 497 functions as the Nucleophile in the catalytic mechanism. Residue tryptophan 552 participates in substrate binding.

Belongs to the glycosyl hydrolase 10 (cellulase F) family.

The protein localises to the cell outer membrane. The catalysed reaction is Endohydrolysis of (1-&gt;4)-beta-D-xylosidic linkages in xylans.. It participates in glycan degradation; xylan degradation. In terms of biological role, endo-acting xylanase which specifically cleaves internal linkages on the xylan backbone, releasing xylooligosaccharides. Is able to hydrolyze oat spelt xylan, the arabinoxylans from wheat and rye, and glucuronoxylan. Also displays very low activity against xylooligosaccharides. During the xylan degradation process, Xyn10C may act on the soluble xylans and long xylooligosaccharides products released by the secreted xylanases Xyn11A, Xyn11B and Xyn10A. The protein is Endo-beta-1,4-xylanase Xyn10C (xyn10C) of Cellvibrio japonicus (Pseudomonas fluorescens subsp. cellulosa).